The following is a 627-amino-acid chain: Druantia protein DruC (627 aa).

Its subcellular location is the cytoplasm. Its function is as follows. Component of antiviral defense system Druantia type I, composed of DruA, DruB, DruC, DruD and DruE. Expression of Druantia in E.coli (strain MG1655) confers resistance to phage lambda, SECphi18, SECphi27 and T4. The polypeptide is Druantia protein DruC (Escherichia coli (strain UMEA 4076-1)).